We begin with the raw amino-acid sequence, 51 residues long: Large ribosomal subunit protein eL39 (51 aa).

Basic residues predominate over residues 1–15; that stretch reads MPSHKSFRTKQKLAK. A disordered region spans residues 1–21; it reads MPSHKSFRTKQKLAKAARQNR.

Belongs to the eukaryotic ribosomal protein eL39 family. In terms of assembly, component of the large ribosomal subunit (LSU). Mature yeast ribosomes consist of a small (40S) and a large (60S) subunit. The 40S small subunit contains 1 molecule of ribosomal RNA (18S rRNA) and at least 33 different proteins. The large 60S subunit contains 3 rRNA molecules (25S, 5.8S and 5S rRNA) and at least 46 different proteins. eL39 interacts with yih1.

It is found in the cytoplasm. Functionally, component of the ribosome, a large ribonucleoprotein complex responsible for the synthesis of proteins in the cell. The small ribosomal subunit (SSU) binds messenger RNAs (mRNAs) and translates the encoded message by selecting cognate aminoacyl-transfer RNA (tRNA) molecules. The large subunit (LSU) contains the ribosomal catalytic site termed the peptidyl transferase center (PTC), which catalyzes the formation of peptide bonds, thereby polymerizing the amino acids delivered by tRNAs into a polypeptide chain. The nascent polypeptides leave the ribosome through a tunnel in the LSU and interact with protein factors that function in enzymatic processing, targeting, and the membrane insertion of nascent chains at the exit of the ribosomal tunnel. This is Large ribosomal subunit protein eL39 (rpl39) from Schizosaccharomyces pombe (strain 972 / ATCC 24843) (Fission yeast).